The sequence spans 160 residues: Calcium-binding protein CP1 (160 aa).

EF-hand domains are found at residues 22 to 49 (AFEI…IPSG), 52 to 87 (NDET…TPFS), and 93 to 128 (GDDG…AGLA). Ca(2+)-binding residues include Asp-27, Asp-29, Asp-31, Lys-33, Asp-38, Asp-65, Asn-67, Asp-69, Glu-76, Asp-106, Asp-108, Asp-110, Arg-112, and Asp-117.

As to expression, expressed in roots and flowers.

It localises to the cytoplasm. Its subcellular location is the cytosol. Binds calcium in vitro. The protein is Calcium-binding protein CP1 of Arabidopsis thaliana (Mouse-ear cress).